A 331-amino-acid polypeptide reads, in one-letter code: MAAVALPLLLLLASPATPTPARDPFSPQLGDTQRCQQRCRQRHPGLPPAQPEPEGPSESPNNKAVLINACERGCRLFSICRFVARSSRPNATETECEAACTEAYVKAKEQQACSEGCWGQIPEPETQLEQKELALDPPSGSLSLRHLFTMLCSDLMSSAQDLISSTWTYSLQTDNRKTQPVVENFAFQGSRLQRVEVTWRGSHPKALEVHMDPMSPLEKVRRAKPHLKTSKAKVESEDQQESDFLSCMSRRSGLPRWVLFCCLFLSVLIILWLSCCTLVTTPGQHLKFQPLTAEQHKGLLVESNWPLYPPLPPAYEDSPPPYKLKLDLTTL.

A signal peptide spans 1-21 (MAAVALPLLLLLASPATPTPA). A disordered region spans residues 15–62 (PATPTPARDPFSPQLGDTQRCQQRCRQRHPGLPPAQPEPEGPSESPNN). Residues 45–54 (GLPPAQPEPE) show a composition bias toward pro residues. N90 carries N-linked (GlcNAc...) asparagine glycosylation. The helical transmembrane segment at 258–278 (VLFCCLFLSVLIILWLSCCTL) threads the bilayer. Residues 329-331 (TTL) carry the Microbody targeting signal motif.

It belongs to the TMEM59 family.

It is found in the golgi apparatus membrane. Its function is as follows. Modulates the O-glycosylation and complex N-glycosylation steps occurring during the Golgi maturation of APP. Inhibits APP transport to the cell surface and further shedding. The polypeptide is Transmembrane protein 59-like (Tmem59l) (Rattus norvegicus (Rat)).